Reading from the N-terminus, the 250-residue chain is Probable phosphatase VPA1527 (250 aa).

Residues histidine 8, histidine 10, histidine 16, histidine 41, glutamate 74, histidine 102, histidine 132, aspartate 194, and histidine 196 each coordinate Zn(2+).

The protein belongs to the PHP family. Zn(2+) is required as a cofactor.

This is Probable phosphatase VPA1527 from Vibrio parahaemolyticus serotype O3:K6 (strain RIMD 2210633).